The sequence spans 408 residues: MKVLVINAGSSSLKYQLIDMINESPLAVGLCERVGIDNSIITQKRFDGKKLEKQVDLPTHRVALEEVVKALTDPEFGVITDMGEINAVGHRVVHGGEKFTTSALFDAGVEEAIRDCFDLAPLHNPPNMMGISACAEIMPGTPMVIVFDTAFHQTMPAYAYMYALPYDLYEKYGVRKYGFHGTSHKYVAGRAALMLGKPIEDTKIITCHLGNGSSIAAVKGGKSIDTSMGFTPLEGVAMGTRCGSIDPAVVPFVMDKESLSSREVDTLMNKKSGVLGVSGISNDFRDLDEAASHGNERAELALEIFAYSVKRVIGEYLAVLNGADAIVFTAGIGENSASIRKRILTGLEGLGIKIDEEKNKIRGQEIDISTPDSSIRVFVIPTNEELAIARETKEIVETEAKLRKSVPV.

A Mg(2+)-binding site is contributed by N7. K14 serves as a coordination point for ATP. Substrate is bound at residue R91. D148 acts as the Proton donor/acceptor in catalysis. ATP-binding positions include H208 to G212, D283 to R285, and G331 to N335. Mg(2+) is bound at residue E384.

This sequence belongs to the acetokinase family. Homodimer. The cofactor is Mg(2+). It depends on Mn(2+) as a cofactor.

The protein localises to the cytoplasm. It catalyses the reaction acetate + ATP = acetyl phosphate + ADP. It functions in the pathway metabolic intermediate biosynthesis; acetyl-CoA biosynthesis; acetyl-CoA from acetate: step 1/2. Functionally, catalyzes the formation of acetyl phosphate from acetate and ATP. Can also catalyze the reverse reaction. In Methanosarcina barkeri (strain Fusaro / DSM 804), this protein is Acetate kinase.